Consider the following 692-residue polypeptide: PTS system glucoside-specific EIICBA component (692 aa).

The PTS EIIC type-1 domain occupies 6-430 (KKFFGQLQRI…LNLKTPGRED (425 aa)). 10 helical membrane passes run 15–35 (IGKA…LLTF), 84–104 (LGLA…YLIM), 140–160 (LVLG…IGAL), 185–205 (FVPI…SFVW), 215–235 (LSNF…GIIE), 287–307 (AFTT…AFAI), 318–338 (VVGG…ITEP), 344–364 (LFVA…SFLI), 370–390 (VQIG…GLLS), and 398–418 (LVIP…TFLI). Positions 441–522 (SELPFEVLEA…QQIMDGKITS (82 aa)) constitute a PTS EIIB type-1 domain. Cysteine 463 functions as the Phosphocysteine intermediate; for EIIB activity in the catalytic mechanism. Positions 563-667 (DKVFSAKMMG…DTITPIIITN (105 aa)) constitute a PTS EIIA type-1 domain. Histidine 615 functions as the Tele-phosphohistidine intermediate; for EIIA activity in the catalytic mechanism.

It is found in the cell membrane. Inhibited by methyl alpha-D-glucoside, methyl beta-D-glucoside, p-nitrophenyl alpha-D-glucoside, o-nitrophenyl beta-D-glucoside and salicin, but not by 2-deoxyglucose. Its function is as follows. The phosphoenolpyruvate-dependent sugar phosphotransferase system (sugar PTS), a major carbohydrate active -transport system, catalyzes the phosphorylation of incoming sugar substrates concomitantly with their translocation across the cell membrane. This system is involved in alpha- and beta-glucoside transport. Can also transport glucose, but not galactose, fructose, mannose, cellobiose, sucrose, maltose, lactose, melibiose and trehalose, as well as N-acetylglucosamine. The protein is PTS system glucoside-specific EIICBA component (glcB) of Staphylococcus carnosus (strain TM300).